We begin with the raw amino-acid sequence, 300 residues long: uncharacterized protein (300 aa).

Belongs to the histone deacetylase family.

Functionally, putative deacetylase. This is an uncharacterized protein from Picosynechococcus sp. (strain ATCC 27264 / PCC 7002 / PR-6) (Agmenellum quadruplicatum).